The primary structure comprises 585 residues: Frizzled-5 (585 aa).

A signal peptide spans 1–26 (MARPDPSAPPSLLLLLLAQLVGRAAA). Topologically, residues 27–238 (ASKAPVCQEI…PDERTFATFW (212 aa)) are extracellular. The FZ domain occupies 28–150 (SKAPVCQEIT…GDAEVLCMDY (123 aa)). Intrachain disulfides connect C33–C94, C41–C87, C78–C116, C105–C147, and C109–C133. The N-linked (GlcNAc...) asparagine glycan is linked to N47. An N-linked (GlcNAc...) asparagine glycan is attached at N151. The segment at 156-182 (TTASPKSFPAKPTLPGPPGAPSSGGEC) is disordered. Residues 239–259 (IGLWSVLCFISTSTTVATFLI) form a helical membrane-spanning segment. Residues 260–270 (DMERFRYPERP) lie on the Cytoplasmic side of the membrane. A helical transmembrane segment spans residues 271 to 291 (IIFLSACYLCVSLGFLVRLVV). Residues 292–315 (GHASVACSREHSHIHYETTGPALC) are Extracellular-facing. Residues 316–336 (TVVFLLVYFFGMASSIWWVIL) form a helical membrane-spanning segment. Residues 337-358 (SLTWFLAAGMKWGNEAIAGYAQ) lie on the Cytoplasmic side of the membrane. A helical transmembrane segment spans residues 359–379 (YFHLAAWLIPSVKSITALALS). At 380–402 (SVDGDPVAGVCYVGNQNLNSLRG) the chain is on the extracellular side. The helical transmembrane segment at 403–423 (FVLGPLVLYLLVGTLFLLAGF) threads the bilayer. Residues 424 to 449 (VSLFRIRSVIKQGGTKTDKLEKLMIR) are Cytoplasmic-facing. The chain crosses the membrane as a helical span at residues 450 to 470 (IGIFTLLYTVPASIVVACYLY). Over 471–500 (EQHYRESWEAALTCACPGSDAGQPRAKPEY) the chain is Extracellular. Residues 501–521 (WVLMLKYFMCLVVGITSGVWI) traverse the membrane as a helical segment. Residues 522–585 (WSGKTLESWR…YHKQVSLSHV (64 aa)) lie on the Cytoplasmic side of the membrane. The short motif at 525-530 (KTLESW) is the Lys-Thr-X-X-X-Trp motif, mediates interaction with the PDZ domain of Dvl family members element. A PDZ-binding motif is present at residues 583-585 (SHV).

The protein belongs to the G-protein coupled receptor Fz/Smo family. Binding of unsaturated fatty acid molecules (via FZ domain) promotes homodimerization (via FZ domain). Interacts with WNT2B. Interacts with WNT7A. Interacts with GOPC. Post-translationally, ubiquitinated by RNF43 and ZNRF3, leading to its degradation by the proteasome.

Its subcellular location is the cell membrane. It is found in the golgi apparatus membrane. The protein localises to the synapse. The protein resides in the perikaryon. It localises to the cell projection. Its subcellular location is the dendrite. It is found in the axon. In terms of biological role, receptor for Wnt proteins. Functions in the canonical Wnt/beta-catenin signaling pathway. In vitro activates WNT2, WNT10B, WNT5A, but not WNT2B or WNT4 signaling. In neurons, activation by WNT7A promotes formation of synapses. May be involved in transduction and intercellular transmission of polarity information during tissue morphogenesis and/or in differentiated tissues. Plays a role in yolk sac angiogenesis and in placental vascularization. Plays a role in ocular development. The polypeptide is Frizzled-5 (Fzd5) (Rattus norvegicus (Rat)).